The primary structure comprises 371 residues: Monomethylxanthine methyltransferase 2 (371 aa).

Tyr-18, Cys-61, Asn-66, Asp-100, Leu-101, Ser-139, Phe-140, and Cys-156 together coordinate S-adenosyl-L-homocysteine. 3 residues coordinate theobromine: Tyr-157, His-160, and Trp-161. Asn-178, Asp-260, Phe-262, and Asn-263 together coordinate Mg(2+). Tyr-355 is a binding site for theobromine.

This sequence belongs to the methyltransferase superfamily. Type-7 methyltransferase family. Mg(2+) is required as a cofactor.

The catalysed reaction is 7-methylxanthine + S-adenosyl-L-methionine = theobromine + S-adenosyl-L-homocysteine + H(+). It functions in the pathway alkaloid biosynthesis. Involved in the biosynthesis of caffeine. Catalyzes the conversion of 7-methylxanthine (7mX) to theobromine and with a lower activity of paraxanthine to caffeine. The protein is Monomethylxanthine methyltransferase 2 of Coffea canephora (Robusta coffee).